Here is a 746-residue protein sequence, read N- to C-terminus: Protein C-mannosyl-transferase DPY19L1 (746 aa).

A disordered region spans residues 1–68 (MVLQARSKHR…RAETAAPAPD (68 aa)). Pro residues predominate over residues 14-27 (PRPPRPARSSPPPL). Transmembrane regions (helical) follow at residues 93–113 (STLL…TQLF), 139–159 (YSYF…WMIM), 227–247 (ACFY…LFFI), 248–268 (YGTY…CFFF), 308–328 (YRGS…PWQF), 329–349 (AQFV…VGYI), 357–377 (IIYT…GNSM), 378–398 (LLTS…AMKP), 405–425 (VSEL…TVTL), 481–501 (LLLP…INDM), 520–540 (GELV…ILIM), and 562–582 (LFGW…VLAA).

The protein belongs to the dpy-19 family.

The protein localises to the endoplasmic reticulum membrane. The enzyme catalyses L-tryptophyl-[protein] + a di-trans,poly-cis-dolichyl beta-D-mannosyl phosphate = C-alpha-D-mannosyl-L-tryptophyl-[protein] + a di-trans,poly-cis-dolichyl phosphate + H(+). It participates in protein modification; protein glycosylation. C-mannosyltransferase that mediates the C-mannosylation tryptophan residues on target proteins. The reaction occurs on the luminal side of the endoplasmic reticulum and involves the transfer of a mannose unit from a dolichylphosphate mannose (Dol-P-Man) donor to an acceptor protein containing a WxxW consensus sequence. C-mannosylates the first two tryptophans in the WxxWxxWxxC sequence motif in thrombospondin (TSP) type-1 repeats of UNC5A. Regulates neurite extension during development. The polypeptide is Protein C-mannosyl-transferase DPY19L1 (Dpy19l1) (Rattus norvegicus (Rat)).